The sequence spans 213 residues: MAAPAVSGLSRQVRYFSTSVVRPFAKLVRPPVQVYGIEGRYATALYSAASKQKKLEQVEKELLRVAQILKEPKVAASVLNPYVKHSVKVKSLSDIIAKERFSPLTTNLINLLAENGRLSNTQGVVSAFSTMMSVHRGEIPCTVTTASPLEETTLSELKTVLKSFLSQGQILKLEVKTDPSIMGGMIVRIGEKYVDMSAKTKIQKLSKAMREVI.

A mitochondrion-targeting transit peptide spans 1–23; that stretch reads MAAPAVSGLSRQVRYFSTSVVRP. Residues 5-23 carry the SIFI-degron motif; the sequence is AVSGLSRQVRYFSTSVVRP. Residues Lys-54, Lys-60, Lys-70, and Lys-73 each carry the N6-acetyllysine modification. N6-succinyllysine is present on Lys-90. Lys-158 and Lys-162 each carry N6-acetyllysine; alternate. N6-succinyllysine; alternate is present on residues Lys-158 and Lys-162. 3 positions are modified to N6-acetyllysine: Lys-172, Lys-176, and Lys-192. Lys-199 carries the post-translational modification N6-succinyllysine.

Belongs to the ATPase delta chain family. As to quaternary structure, component of the ATP synthase complex composed at least of ATP5F1A/subunit alpha, ATP5F1B/subunit beta, ATP5MC1/subunit c (homooctomer), MT-ATP6/subunit a, MT-ATP8/subunit 8, ATP5ME/subunit e, ATP5MF/subunit f, ATP5MG/subunit g, ATP5MK/subunit k, ATP5MJ/subunit j, ATP5F1C/subunit gamma, ATP5F1D/subunit delta, ATP5F1E/subunit epsilon, ATP5PF/subunit F6, ATP5PB/subunit b, ATP5PD/subunit d, ATP5PO/subunit OSCP. ATP synthase complex consists of a soluble F(1) head domain (subunits alpha(3) and beta(3)) - the catalytic core - and a membrane F(0) domain - the membrane proton channel (subunits c, a, 8, e, f, g, k and j). These two domains are linked by a central stalk (subunits gamma, delta, and epsilon) rotating inside the F1 region and a stationary peripheral stalk (subunits F6, b, d, and OSCP). In terms of processing, acetylation at Lys-162 decreases ATP production. Deacetylated by SIRT3. In response to mitochondrial stress, the precursor protein is ubiquitinated by the SIFI complex in the cytoplasm before mitochondrial import, leading to its degradation. Within the SIFI complex, UBR4 initiates ubiquitin chain that are further elongated or branched by KCMF1.

It is found in the mitochondrion. The protein localises to the mitochondrion inner membrane. In terms of biological role, subunit OSCP, of the mitochondrial membrane ATP synthase complex (F(1)F(0) ATP synthase or Complex V) that produces ATP from ADP in the presence of a proton gradient across the membrane which is generated by electron transport complexes of the respiratory chain. ATP synthase complex consist of a soluble F(1) head domain - the catalytic core - and a membrane F(1) domain - the membrane proton channel. These two domains are linked by a central stalk rotating inside the F(1) region and a stationary peripheral stalk. During catalysis, ATP synthesis in the catalytic domain of F(1) is coupled via a rotary mechanism of the central stalk subunits to proton translocation. In vivo, can only synthesize ATP although its ATP hydrolase activity can be activated artificially in vitro. Part of the complex F(0) domain. Part of the complex F(0) domain and the peripheric stalk, which acts as a stator to hold the catalytic alpha(3)beta(3) subcomplex and subunit a/ATP6 static relative to the rotary elements. This chain is ATP synthase peripheral stalk subunit OSCP, mitochondrial, found in Plecturocebus moloch (Dusky titi monkey).